Reading from the N-terminus, the 496-residue chain is MVISVEAADYTAFPCAALLVGCREDNPLEDSLLARIDQLLQGAIASLVQSREITGELNRVTILHTLGRLPAERIVLVGLGNSGALTSDRLRQVGGSAVKALKGAGVTRAASVVHRAAGVPPTSVADIAQGLSLGDYSFDIYKTKPGTTVPVTELVNLFEPGTDTADAERLLAADATICEAVSFARDLVSQPGNVATPLFLAEKALEFSARLGIACTVLDRDEMERQGMEGILSVAKGSHQLPRFIVLEYRGGSADKRPTVLVGKGITFDSGGISLKPREGMERMKDDMAGAAAVMGAVMAVAGLRLPVNVIGLIPAAENLPGGGAYKPGDIVRTMSGQTVEIVNTDAEGRMILSDALFYAQRFKPAAVIDLATLTGACLVALGSAVSGVMGNDAALVKLLRRAGEATGERLWELPLWDEYGEIMKSDVADLKNAGGPHAGTITAAWFLQRFVGKSRWAHVDIAGTAWEEKGRPYQPKGATGVGVRLLVEYLKATVR.

Residues lysine 264 and aspartate 269 each coordinate Mn(2+). Residue lysine 276 is part of the active site. Positions 287, 346, and 348 each coordinate Mn(2+). Arginine 350 is an active-site residue.

Belongs to the peptidase M17 family. Mn(2+) serves as cofactor.

The protein resides in the cytoplasm. The enzyme catalyses Release of an N-terminal amino acid, Xaa-|-Yaa-, in which Xaa is preferably Leu, but may be other amino acids including Pro although not Arg or Lys, and Yaa may be Pro. Amino acid amides and methyl esters are also readily hydrolyzed, but rates on arylamides are exceedingly low.. It catalyses the reaction Release of an N-terminal amino acid, preferentially leucine, but not glutamic or aspartic acids.. In terms of biological role, presumably involved in the processing and regular turnover of intracellular proteins. Catalyzes the removal of unsubstituted N-terminal amino acids from various peptides. This is Probable cytosol aminopeptidase from Geobacter sulfurreducens (strain ATCC 51573 / DSM 12127 / PCA).